Reading from the N-terminus, the 224-residue chain is UPF0758 protein Bpro_0948 (224 aa).

Residues 102 to 224 (LFSTPQAVRD…AVSMAELGLL (123 aa)) enclose the MPN domain. Zn(2+)-binding residues include H173, H175, and D186. Residues 173–186 (HNHPSGAATPSRAD) carry the JAMM motif motif.

It belongs to the UPF0758 family.

The chain is UPF0758 protein Bpro_0948 from Polaromonas sp. (strain JS666 / ATCC BAA-500).